The following is a 295-amino-acid chain: Protoheme IX farnesyltransferase 2 (295 aa).

9 consecutive transmembrane segments (helical) span residues 9–29, 36–56, 83–103, 108–128, 135–155, 163–183, 209–229, 230–250, and 264–284; these read ITKP…FFLA, FALF…GCVF, LTLA…LLYV, LAAF…SLWL, GTLV…CAVS, VTLL…IAIF, IVLY…GGYA, GLGY…MAWG, and VFGF…VDSQ.

The protein belongs to the UbiA prenyltransferase family. Protoheme IX farnesyltransferase subfamily.

It is found in the cell inner membrane. It catalyses the reaction heme b + (2E,6E)-farnesyl diphosphate + H2O = Fe(II)-heme o + diphosphate. It functions in the pathway porphyrin-containing compound metabolism; heme O biosynthesis; heme O from protoheme: step 1/1. Converts heme B (protoheme IX) to heme O by substitution of the vinyl group on carbon 2 of heme B porphyrin ring with a hydroxyethyl farnesyl side group. The protein is Protoheme IX farnesyltransferase 2 of Pseudomonas entomophila (strain L48).